A 377-amino-acid chain; its full sequence is Putative glutamate--cysteine ligase 2 (377 aa).

The protein belongs to the glutamate--cysteine ligase type 2 family. YbdK subfamily.

The catalysed reaction is L-cysteine + L-glutamate + ATP = gamma-L-glutamyl-L-cysteine + ADP + phosphate + H(+). ATP-dependent carboxylate-amine ligase which exhibits weak glutamate--cysteine ligase activity. This Ralstonia pickettii (strain 12J) protein is Putative glutamate--cysteine ligase 2.